The primary structure comprises 311 residues: N-acetylmuramic acid 6-phosphate etherase (311 aa).

Residues 66 to 230 (VVEAFEADGR…TTAAMVRLGK (165 aa)) enclose the SIS domain. Glu94 serves as the catalytic Proton donor. Residue Glu125 is part of the active site.

The protein belongs to the GCKR-like family. MurNAc-6-P etherase subfamily. As to quaternary structure, homodimer.

It carries out the reaction N-acetyl-D-muramate 6-phosphate + H2O = N-acetyl-D-glucosamine 6-phosphate + (R)-lactate. It functions in the pathway amino-sugar metabolism; N-acetylmuramate degradation. Its function is as follows. Specifically catalyzes the cleavage of the D-lactyl ether substituent of MurNAc 6-phosphate, producing GlcNAc 6-phosphate and D-lactate. In Salinibacter ruber (strain DSM 13855 / M31), this protein is N-acetylmuramic acid 6-phosphate etherase.